Reading from the N-terminus, the 1340-residue chain is Early transcription factor large subunit homolog (1340 aa).

Belongs to the asfivirus G1340L family.

It is found in the virion. Functionally, putative initation factor. This chain is Early transcription factor large subunit homolog, found in African swine fever virus (isolate Tick/South Africa/Pretoriuskop Pr4/1996) (ASFV).